A 163-amino-acid polypeptide reads, in one-letter code: Putative pre-16S rRNA nuclease (163 aa).

It belongs to the YqgF nuclease family.

The protein resides in the cytoplasm. Functionally, could be a nuclease involved in processing of the 5'-end of pre-16S rRNA. This Nitrobacter winogradskyi (strain ATCC 25391 / DSM 10237 / CIP 104748 / NCIMB 11846 / Nb-255) protein is Putative pre-16S rRNA nuclease.